The following is a 355-amino-acid chain: Uroporphyrinogen decarboxylase (355 aa).

Substrate-binding positions include 27-31, aspartate 78, tyrosine 155, serine 210, and histidine 328; that span reads RQAGR.

Belongs to the uroporphyrinogen decarboxylase family. As to quaternary structure, homodimer.

It localises to the cytoplasm. It catalyses the reaction uroporphyrinogen III + 4 H(+) = coproporphyrinogen III + 4 CO2. The protein operates within porphyrin-containing compound metabolism; protoporphyrin-IX biosynthesis; coproporphyrinogen-III from 5-aminolevulinate: step 4/4. Its function is as follows. Catalyzes the decarboxylation of four acetate groups of uroporphyrinogen-III to yield coproporphyrinogen-III. The polypeptide is Uroporphyrinogen decarboxylase (Pseudomonas paraeruginosa (strain DSM 24068 / PA7) (Pseudomonas aeruginosa (strain PA7))).